Consider the following 338-residue polypeptide: Holliday junction branch migration complex subunit RuvB (338 aa).

The large ATPase domain (RuvB-L) stretch occupies residues 1 to 180 (MTRLVTPDIT…FGVISRLEFY (180 aa)). ATP is bound by residues leucine 19, arginine 20, glycine 61, lysine 64, threonine 65, threonine 66, 127–129 (EDY), arginine 170, tyrosine 180, and arginine 217. Threonine 65 provides a ligand contact to Mg(2+). The segment at 181-251 (TDDELTTIVT…VVDESLKLLE (71 aa)) is small ATPAse domain (RuvB-S). The interval 254–338 (EKGFDHMDRT…PPSSSQGNLF (85 aa)) is head domain (RuvB-H). The DNA site is built by arginine 290, arginine 309, and arginine 314.

Belongs to the RuvB family. As to quaternary structure, homohexamer. Forms an RuvA(8)-RuvB(12)-Holliday junction (HJ) complex. HJ DNA is sandwiched between 2 RuvA tetramers; dsDNA enters through RuvA and exits via RuvB. An RuvB hexamer assembles on each DNA strand where it exits the tetramer. Each RuvB hexamer is contacted by two RuvA subunits (via domain III) on 2 adjacent RuvB subunits; this complex drives branch migration. In the full resolvosome a probable DNA-RuvA(4)-RuvB(12)-RuvC(2) complex forms which resolves the HJ.

It localises to the cytoplasm. It carries out the reaction ATP + H2O = ADP + phosphate + H(+). Its function is as follows. The RuvA-RuvB-RuvC complex processes Holliday junction (HJ) DNA during genetic recombination and DNA repair, while the RuvA-RuvB complex plays an important role in the rescue of blocked DNA replication forks via replication fork reversal (RFR). RuvA specifically binds to HJ cruciform DNA, conferring on it an open structure. The RuvB hexamer acts as an ATP-dependent pump, pulling dsDNA into and through the RuvAB complex. RuvB forms 2 homohexamers on either side of HJ DNA bound by 1 or 2 RuvA tetramers; 4 subunits per hexamer contact DNA at a time. Coordinated motions by a converter formed by DNA-disengaged RuvB subunits stimulates ATP hydrolysis and nucleotide exchange. Immobilization of the converter enables RuvB to convert the ATP-contained energy into a lever motion, pulling 2 nucleotides of DNA out of the RuvA tetramer per ATP hydrolyzed, thus driving DNA branch migration. The RuvB motors rotate together with the DNA substrate, which together with the progressing nucleotide cycle form the mechanistic basis for DNA recombination by continuous HJ branch migration. Branch migration allows RuvC to scan DNA until it finds its consensus sequence, where it cleaves and resolves cruciform DNA. This chain is Holliday junction branch migration complex subunit RuvB, found in Geobacter metallireducens (strain ATCC 53774 / DSM 7210 / GS-15).